A 504-amino-acid polypeptide reads, in one-letter code: Aspartyl/glutamyl-tRNA(Asn/Gln) amidotransferase subunit B (504 aa).

The protein belongs to the GatB/GatE family. GatB subfamily. Heterotrimer of A, B and C subunits.

It catalyses the reaction L-glutamyl-tRNA(Gln) + L-glutamine + ATP + H2O = L-glutaminyl-tRNA(Gln) + L-glutamate + ADP + phosphate + H(+). The catalysed reaction is L-aspartyl-tRNA(Asn) + L-glutamine + ATP + H2O = L-asparaginyl-tRNA(Asn) + L-glutamate + ADP + phosphate + 2 H(+). In terms of biological role, allows the formation of correctly charged Asn-tRNA(Asn) or Gln-tRNA(Gln) through the transamidation of misacylated Asp-tRNA(Asn) or Glu-tRNA(Gln) in organisms which lack either or both of asparaginyl-tRNA or glutaminyl-tRNA synthetases. The reaction takes place in the presence of glutamine and ATP through an activated phospho-Asp-tRNA(Asn) or phospho-Glu-tRNA(Gln). This chain is Aspartyl/glutamyl-tRNA(Asn/Gln) amidotransferase subunit B, found in Tropheryma whipplei (strain Twist) (Whipple's bacillus).